The following is a 373-amino-acid chain: ADP-forming sulfoacetate-CoA ligase subunit SauC (373 aa).

One can recognise an ATP-grasp domain in the interval 9–249; sequence KEAFREKGLP…YLQFNGDIAL (241 aa). 35 to 97 contacts ATP; it reads FAEVGFPCVL…EEAVDIDREI (63 aa). Residues Glu186 and Asn188 each contribute to the Mg(2+) site.

It belongs to the succinate/malate CoA ligase beta subunit family. In terms of assembly, forms a complex with SauD. The cofactor is Mg(2+).

It catalyses the reaction sulfoacetate + ATP + CoA = sulfoacetyl-CoA + ADP + phosphate. Functionally, involved in the degradation of sulfoacetate. Catalyzes the CoA- and ATP-dependent conversion of sulfoacetate to sulfoacetyl-CoA and ADP. Cannot use other sulfonic and carboxylic acids, and shows only residual activity with 3-sulfopropanoate and malonic acid. The sequence is that of ADP-forming sulfoacetate-CoA ligase subunit SauC from Bilophila wadsworthia (strain 3_1_6).